The primary structure comprises 491 residues: MATFKDACYHYKKLNKLNSLVLKLGANDEWRPAPVTKYKGWCLDCCQYTNLTYCRGCALYHVCQWCSQYNRCFLDEEPHLLRMRTFKDVVTKEDIEGLLTMYETLFPINEKLVNKFINSVKQRKCRNEYLLEWYNHLLMPITLQALTINLEDNVYYIFGYYDCMEHENQTPFQFINLLEKYDKLLLDDRNFHRMSHLPVILQQEYALRYFSKSRFLSKGKKRLSRSDFSDSLMEDRHSPTSLMQVVRNCISIHINDCEWNKACTLIVDARNYISIMNSSYTEHYSVSQRCKLFTKYKFGIVSRLVKPNYIFSSHESCALNVHNCKWCQINNHYKVWEDFRLRKIYNNVMDFIRALVKSNGNVGHCSSQESVYKYIPDLFLICKTEKWNEAVEMLFNYLEPVDINGTEYVLLDYEVNWEVRGLVMQNMDGKVPRILNMNDTKKILSAMIFDWFDTRYMRETPMTTSTTNQLRTLNKRNELIDEYDLELSDVE.

Positions 1–81 (MATFKDACYH…CFLDEEPHLL (81 aa)) are RNA-binding. The tract at residues 42–79 (CLDCCQYTNLTYCRGCALYHVCQWCSQYNRCFLDEEPH) is zinc-binding domain. Residues 82-176 (RMRTFKDVVT…ENQTPFQFIN (95 aa)) form an important for cytoskeleton localization region. Residues 320–491 (NVHNCKWCQI…EYDLELSDVE (172 aa)) are interaction with host IRF3. The pLxIS motif signature appears at 485 to 488 (LELS).

The protein belongs to the rotavirus NSP1 family. As to quaternary structure, interacts (via C-terminus) with host IRF3; this interaction leads to IRF3 degradation. Interacts with host IRF7; this interaction leads to IRF7 degradation. Interacts with host CUL1 and CUL3.

Its subcellular location is the host cytoplasm. The protein resides in the host cytoskeleton. In terms of biological role, plays a role in the inhibition of host innate immunity by inducing the degradation of key host factors required to activate interferon production such as IRF3, IRF5 or IRF7. Associates with components of cullin RING ligases (CRLs) including CUL1 or CUL3, which are essential multisubunit ubiquitination complexes, to modulate their activities. This chain is Non-structural protein 1, found in Bos taurus (Bovine).